A 258-amino-acid chain; its full sequence is Exu regulon transcriptional regulator (258 aa).

The HTH gntR-type domain maps to 7–75 (RRLYQQLAAD…KGSGIHVVSN (69 aa)). The H-T-H motif DNA-binding region spans 35 to 54 (ERFIADEKNVSRTVVREAII).

In terms of biological role, repressor for the exu regulon that encode genes involved in hexuronate utilization. It regulates the ExuT, UxaCA and UxuRAB operons. Binds D-tagaturonate and D-fructuronate as inducers. The chain is Exu regulon transcriptional regulator (exuR) from Escherichia coli O157:H7.